Reading from the N-terminus, the 387-residue chain is Deoxyguanosinetriphosphate triphosphohydrolase-like protein (387 aa).

The interval methionine 1–serine 26 is disordered. Residues valine 17–serine 26 are compositionally biased toward basic and acidic residues. Residues arginine 62 to asparagine 198 form the HD domain.

It belongs to the dGTPase family. Type 2 subfamily.

This chain is Deoxyguanosinetriphosphate triphosphohydrolase-like protein, found in Roseobacter denitrificans (strain ATCC 33942 / OCh 114) (Erythrobacter sp. (strain OCh 114)).